The primary structure comprises 433 residues: Serine--tRNA ligase (433 aa).

Thr235 to Glu237 serves as a coordination point for L-serine. ATP is bound at residue Arg266 to Glu268. Residue Glu289 participates in L-serine binding. Glu353–Ser356 lines the ATP pocket. Ser388 contacts L-serine.

Belongs to the class-II aminoacyl-tRNA synthetase family. Type-1 seryl-tRNA synthetase subfamily. As to quaternary structure, homodimer. The tRNA molecule binds across the dimer.

Its subcellular location is the cytoplasm. The enzyme catalyses tRNA(Ser) + L-serine + ATP = L-seryl-tRNA(Ser) + AMP + diphosphate + H(+). It catalyses the reaction tRNA(Sec) + L-serine + ATP = L-seryl-tRNA(Sec) + AMP + diphosphate + H(+). It functions in the pathway aminoacyl-tRNA biosynthesis; selenocysteinyl-tRNA(Sec) biosynthesis; L-seryl-tRNA(Sec) from L-serine and tRNA(Sec): step 1/1. Functionally, catalyzes the attachment of serine to tRNA(Ser). Is also able to aminoacylate tRNA(Sec) with serine, to form the misacylated tRNA L-seryl-tRNA(Sec), which will be further converted into selenocysteinyl-tRNA(Sec). This chain is Serine--tRNA ligase, found in Burkholderia pseudomallei (strain 1106a).